Consider the following 555-residue polypeptide: E3 ubiquitin-protein ligase NEURL1B (555 aa).

The 157-residue stretch at 38-194 (APRFHAQAKG…ITDEVQLLES (157 aa)) folds into the NHR 1 domain. Position 199 is a phosphothreonine (Thr199). The NHR 2 domain occupies 279 to 433 (DLRFHATRGP…GVAGQLRLLG (155 aa)). The segment at 436–493 (QSSPATTTPSGSLSGSQDDSDSDMTFSVNQSSSASESSLVTAPSSPLSPPVSPVFSPP) is disordered. The segment covering 462–480 (SVNQSSSASESSLVTAPSS) has biased composition (low complexity). The span at 481-493 (PLSPPVSPVFSPP) shows a compositional bias: pro residues. Residues 503-543 (CTVCFDGEVDTVIYTCGHMCLCHSCGLRLKRQARACCPICR) form an RING-type zinc finger.

In terms of assembly, interacts with JAG1, DLL1 and DLL4. Highest expression in brain, prostate and small intestine. In the brain the levels are higher in fetal than in adult stage. In the adult brain the highest levels are detected in the olfactory system, cerebellar cortex, optic nerve and the frontal lobe.

It is found in the cytoplasm. It carries out the reaction S-ubiquitinyl-[E2 ubiquitin-conjugating enzyme]-L-cysteine + [acceptor protein]-L-lysine = [E2 ubiquitin-conjugating enzyme]-L-cysteine + N(6)-ubiquitinyl-[acceptor protein]-L-lysine.. The protein operates within protein modification; protein ubiquitination. E3 ubiquitin-protein ligase involved in regulation of the Notch pathway through influencing the stability and activity of several Notch ligands. The protein is E3 ubiquitin-protein ligase NEURL1B (NEURL1B) of Homo sapiens (Human).